A 201-amino-acid chain; its full sequence is Peptidyl-tRNA hydrolase (201 aa).

Tyrosine 14 contributes to the tRNA binding site. Histidine 19 (proton acceptor) is an active-site residue. TRNA contacts are provided by tyrosine 64, asparagine 66, and asparagine 113. The segment at 178–201 (PGPAMNRFNRKPEPPESGGEVAAK) is disordered.

Belongs to the PTH family. As to quaternary structure, monomer.

The protein resides in the cytoplasm. The enzyme catalyses an N-acyl-L-alpha-aminoacyl-tRNA + H2O = an N-acyl-L-amino acid + a tRNA + H(+). Functionally, hydrolyzes ribosome-free peptidyl-tRNAs (with 1 or more amino acids incorporated), which drop off the ribosome during protein synthesis, or as a result of ribosome stalling. Its function is as follows. Catalyzes the release of premature peptidyl moieties from peptidyl-tRNA molecules trapped in stalled 50S ribosomal subunits, and thus maintains levels of free tRNAs and 50S ribosomes. The protein is Peptidyl-tRNA hydrolase of Koribacter versatilis (strain Ellin345).